A 345-amino-acid chain; its full sequence is D-alanine--D-alanine ligase (345 aa).

In terms of domain architecture, ATP-grasp spans 137–342 (KAAFSAAGLP…LEELVHQLLE (206 aa)). 169 to 224 (ETQLGYPCFIKPANLGSSVGISKATNRSELQAGLDLAASHDSRLLVEKGLQVRELE) provides a ligand contact to ATP. Residues aspartate 295, glutamate 309, and asparagine 311 each coordinate Mg(2+).

Belongs to the D-alanine--D-alanine ligase family. Mg(2+) is required as a cofactor. Mn(2+) serves as cofactor.

The protein localises to the cytoplasm. It catalyses the reaction 2 D-alanine + ATP = D-alanyl-D-alanine + ADP + phosphate + H(+). The protein operates within cell wall biogenesis; peptidoglycan biosynthesis. In terms of biological role, cell wall formation. The chain is D-alanine--D-alanine ligase from Synechococcus sp. (strain RCC307).